A 371-amino-acid polypeptide reads, in one-letter code: Hsc70-interacting protein (371 aa).

The segment at 38–80 (MGGKVPPATHKAKSEENTKEEKRDKTTEENIKTEELSSEESDL) is disordered. A compositionally biased stretch (basic and acidic residues) spans 49–72 (AKSEENTKEEKRDKTTEENIKTEE). 3 TPR repeats span residues 113–146 (ANEK…NPRL), 147–180 (AILY…NPDS), and 181–214 (AQPY…DYDE). A compositionally biased stretch (basic and acidic residues) spans 255-271 (KAREEHERAQREEEARR). Positions 255 to 296 (KAREEHERAQREEEARRQSGSQYGSFPGGFPGGMPGNFPGGM) are disordered. Residues 280–296 (FPGGFPGGMPGNFPGGM) are compositionally biased toward gly residues. The 40-residue stretch at 321–360 (DPEVLAAMQDPEVMVAFQDVAQNPSNMSKYQSNPKVMNLI) folds into the STI1 domain. S348 carries the phosphoserine; by GRK5 modification. K355 and K362 each carry N6-acetyllysine.

The protein belongs to the FAM10 family. As to quaternary structure, homotetramer. Interacts with HSC70 as well as DNAJ homologs and HSP90. Interacts (via the C-terminus 302- 318 AA) with GRK5.

It localises to the cytoplasm. One HIP oligomer binds the ATPase domains of at least two HSC70 molecules dependent on activation of the HSC70 ATPase by HSP40. Stabilizes the ADP state of HSC70 that has a high affinity for substrate protein. Through its own chaperone activity, it may contribute to the interaction of HSC70 with various target proteins. This chain is Hsc70-interacting protein (St13), found in Mus musculus (Mouse).